We begin with the raw amino-acid sequence, 314 residues long: tRNA dimethylallyltransferase (314 aa).

9-16 (GPTAVGKT) is an ATP binding site. 11–16 (TAVGKT) lines the substrate pocket. Residues 34-37 (DSVQ) form an interaction with substrate tRNA region.

This sequence belongs to the IPP transferase family. As to quaternary structure, monomer. Requires Mg(2+) as cofactor.

It carries out the reaction adenosine(37) in tRNA + dimethylallyl diphosphate = N(6)-dimethylallyladenosine(37) in tRNA + diphosphate. In terms of biological role, catalyzes the transfer of a dimethylallyl group onto the adenine at position 37 in tRNAs that read codons beginning with uridine, leading to the formation of N6-(dimethylallyl)adenosine (i(6)A). The protein is tRNA dimethylallyltransferase of Desulfitobacterium hafniense (strain DSM 10664 / DCB-2).